Here is a 391-residue protein sequence, read N- to C-terminus: Mannose-6-phosphate isomerase (391 aa).

Residues glutamine 97, histidine 99, glutamate 134, and histidine 255 each contribute to the Zn(2+) site. Arginine 274 is a catalytic residue. The residue at position 280 (lysine 280) is an N6-acetyllysine.

The protein belongs to the mannose-6-phosphate isomerase type 1 family. The cofactor is Zn(2+).

Its subcellular location is the cytoplasm. It carries out the reaction D-mannose 6-phosphate = D-fructose 6-phosphate. Its function is as follows. Involved in the conversion of glucose to GDP-L-fucose, which can be converted to L-fucose, a capsular polysaccharide. This is Mannose-6-phosphate isomerase (manA) from Shigella flexneri.